Here is an 81-residue protein sequence, read N- to C-terminus: Cytotoxin 2b (81 aa).

The signal sequence occupies residues 1-21; it reads MKTLLLTLVVVTTVCLDLGYT. 4 disulfide bridges follow: Cys-24-Cys-42, Cys-35-Cys-59, Cys-63-Cys-74, and Cys-75-Cys-80.

It belongs to the three-finger toxin family. Short-chain subfamily. Type IA cytotoxin sub-subfamily. Monomer in solution; Homodimer and oligomer in the presence of negatively charged lipids forming a pore with a size ranging between 20 and 30 Angstroms. Expressed by the venom gland.

It is found in the secreted. The protein resides in the target cell membrane. Shows cytolytic activity on many different cells by forming pore in lipid membranes. In vivo, increases heart rate or kills the animal by cardiac arrest. In addition, it binds to heparin with high affinity, interacts with Kv channel-interacting protein 1 (KCNIP1) in a calcium-independent manner, and binds to integrin alpha-V/beta-3 (ITGAV/ITGB3) with moderate affinity. This is Cytotoxin 2b from Naja sputatrix (Malayan spitting cobra).